The following is a 218-amino-acid chain: Ribose-5-phosphate isomerase A (218 aa).

Substrate is bound by residues 28–31 (TGST), 81–84 (DGAD), and 94–97 (KGGG). The Proton acceptor role is filled by glutamate 103. Lysine 121 is a substrate binding site.

The protein belongs to the ribose 5-phosphate isomerase family. As to quaternary structure, homodimer.

The catalysed reaction is aldehydo-D-ribose 5-phosphate = D-ribulose 5-phosphate. It participates in carbohydrate degradation; pentose phosphate pathway; D-ribose 5-phosphate from D-ribulose 5-phosphate (non-oxidative stage): step 1/1. Functionally, catalyzes the reversible conversion of ribose-5-phosphate to ribulose 5-phosphate. The protein is Ribose-5-phosphate isomerase A of Yersinia pseudotuberculosis serotype IB (strain PB1/+).